Consider the following 56-residue polypeptide: Large ribosomal subunit protein bL33 (56 aa).

This sequence belongs to the bacterial ribosomal protein bL33 family.

The polypeptide is Large ribosomal subunit protein bL33 (Vibrio campbellii (strain ATCC BAA-1116)).